Here is a 353-residue protein sequence, read N- to C-terminus: GTPase Obg (353 aa).

The Obg domain occupies 1–159 (MKFLDEAKVY…RWIWLRLKLI (159 aa)). The 168-residue stretch at 160-327 (ADAGLVGLPN…ALRALVAVIG (168 aa)) folds into the OBG-type G domain. GTP-binding positions include 166–173 (GLPNAGKS), 191–195 (FTTLH), 212–215 (DIPG), 279–282 (NKID), and 308–310 (SGV). Mg(2+)-binding residues include Ser-173 and Thr-193.

It belongs to the TRAFAC class OBG-HflX-like GTPase superfamily. OBG GTPase family. As to quaternary structure, monomer. It depends on Mg(2+) as a cofactor.

The protein localises to the cytoplasm. In terms of biological role, an essential GTPase which binds GTP, GDP and possibly (p)ppGpp with moderate affinity, with high nucleotide exchange rates and a fairly low GTP hydrolysis rate. Plays a role in control of the cell cycle, stress response, ribosome biogenesis and in those bacteria that undergo differentiation, in morphogenesis control. This Rhodopseudomonas palustris (strain ATCC BAA-98 / CGA009) protein is GTPase Obg.